The following is a 384-amino-acid chain: Anhydro-N-acetylmuramic acid kinase (384 aa).

17 to 24 (GTSMDGVD) serves as a coordination point for ATP.

The protein belongs to the anhydro-N-acetylmuramic acid kinase family.

The catalysed reaction is 1,6-anhydro-N-acetyl-beta-muramate + ATP + H2O = N-acetyl-D-muramate 6-phosphate + ADP + H(+). The protein operates within amino-sugar metabolism; 1,6-anhydro-N-acetylmuramate degradation. It functions in the pathway cell wall biogenesis; peptidoglycan recycling. In terms of biological role, catalyzes the specific phosphorylation of 1,6-anhydro-N-acetylmuramic acid (anhMurNAc) with the simultaneous cleavage of the 1,6-anhydro ring, generating MurNAc-6-P. Is required for the utilization of anhMurNAc either imported from the medium or derived from its own cell wall murein, and thus plays a role in cell wall recycling. This chain is Anhydro-N-acetylmuramic acid kinase, found in Burkholderia thailandensis (strain ATCC 700388 / DSM 13276 / CCUG 48851 / CIP 106301 / E264).